A 72-amino-acid polypeptide reads, in one-letter code: Translation initiation factor IF-1 (72 aa).

In terms of domain architecture, S1-like spans methionine 1 to arginine 72.

The protein belongs to the IF-1 family. In terms of assembly, component of the 30S ribosomal translation pre-initiation complex which assembles on the 30S ribosome in the order IF-2 and IF-3, IF-1 and N-formylmethionyl-tRNA(fMet); mRNA recruitment can occur at any time during PIC assembly.

The protein resides in the cytoplasm. One of the essential components for the initiation of protein synthesis. Stabilizes the binding of IF-2 and IF-3 on the 30S subunit to which N-formylmethionyl-tRNA(fMet) subsequently binds. Helps modulate mRNA selection, yielding the 30S pre-initiation complex (PIC). Upon addition of the 50S ribosomal subunit IF-1, IF-2 and IF-3 are released leaving the mature 70S translation initiation complex. In Klebsiella pneumoniae subsp. pneumoniae (strain ATCC 700721 / MGH 78578), this protein is Translation initiation factor IF-1.